Reading from the N-terminus, the 166-residue chain is UPF0179 protein Tneu_1978 (166 aa).

Residues 140-166 (PPSPSKSGGATASRDPSRAPPSRPLSK) form a disordered region. Pro residues predominate over residues 157-166 (RAPPSRPLSK).

The protein belongs to the UPF0179 family.

This chain is UPF0179 protein Tneu_1978, found in Pyrobaculum neutrophilum (strain DSM 2338 / JCM 9278 / NBRC 100436 / V24Sta) (Thermoproteus neutrophilus).